The following is a 614-amino-acid chain: Sodium- and chloride-dependent betaine transporter (614 aa).

The interval 1–33 (MDRKVAVPEDGPPVVSWLPEEGEKLDQEGEDQV) is disordered. Topologically, residues 1 to 44 (MDRKVAVPEDGPPVVSWLPEEGEKLDQEGEDQVKDRGQWTNKME) are cytoplasmic. Positions 21–33 (EGEKLDQEGEDQV) are enriched in basic and acidic residues. Transmembrane regions (helical) follow at residues 45 to 65 (FVLSVAGEIIGLGNVWRFPYL), 73 to 92 (AFFIPYFIFFFTCGIPVFFL), and 117 to 137 (GIGLASVVIESYLNIYYIIIL). The Extracellular portion of the chain corresponds to 138-210 (AWALFYLFSS…SGIHDLGALR (73 aa)). Residues Cys157 and Cys166 are joined by a disulfide bond. N-linked (GlcNAc...) asparagine glycans are attached at residues Asn171 and Asn183. 9 helical membrane-spanning segments follow: residues 211–229 (WELALCLLLAWLICYFCIW), 238–255 (VVYFTATFPYLMLVILLI), 291–308 (IFFSFAICQGCLTALGSY), 320–341 (IALCFLNSATSFAAGFVVFSIL), 374–393 (MPLSQLWSCLFFIMLIFLGL), 423–441 (LLILAIAVFCYLAGLFLVT), 458–478 (GICLLFLAMFEVICISWVYGA), 499–518 (ISWLFLTPGLCLATFLFSLS), and 538–556 (IGWFLALSSMICVPLFVII). Topologically, residues 557 to 614 (TLLKTRGSFKKRLRQLTTPDPSLPQPKQHLYLDGGTSQDCGPSPTKEGLIVGEKETHL) are cytoplasmic. Residues 591–614 (GTSQDCGPSPTKEGLIVGEKETHL) are disordered.

The protein belongs to the sodium:neurotransmitter symporter (SNF) (TC 2.A.22) family. SLC6A12 subfamily. In terms of assembly, interacts with LIN7C. Kidney.

The protein localises to the basolateral cell membrane. It is found in the cell membrane. The enzyme catalyses 4-aminobutanoate(out) + chloride(out) + 3 Na(+)(out) = 4-aminobutanoate(in) + chloride(in) + 3 Na(+)(in). It catalyses the reaction glycine betaine(out) + 2 chloride(out) + 3 Na(+)(out) = glycine betaine(in) + 2 chloride(in) + 3 Na(+)(in). Functionally, transporter that mediates cellular uptake of betaine and GABA in a sodium- and chloride-dependent process. May have a role in regulation of GABAergic transmission in the brain through the reuptake of GABA into presynaptic terminals, as well as in osmotic regulation. Probably also involved in renal and hepatic osmotic regulation. This is Sodium- and chloride-dependent betaine transporter (SLC6A12) from Canis lupus familiaris (Dog).